Consider the following 256-residue polypeptide: uncharacterized protein (256 aa).

Helical transmembrane passes span 5–25, 30–50, 64–84, and 105–125; these read FIEG…NYLL, ILST…LKVF, VVIF…DPAI, and VGIT…LGII. Residues 198-256 form a disordered region; it reads EKTKSLDSISHSSSSSRKSSTELKIPPVETRIVAEIPVPSSVKRRRHRPNKSMGSIKNS. Positions 203–215 are enriched in low complexity; the sequence is LDSISHSSSSSRK. A phosphoserine mark is found at Ser210 and Ser211.

Its subcellular location is the endoplasmic reticulum membrane. The protein resides in the nucleus membrane. This is an uncharacterized protein from Schizosaccharomyces pombe (strain 972 / ATCC 24843) (Fission yeast).